The primary structure comprises 322 residues: MYTMTDQKQWKGRIDSTTNRSSFRLHQQVKRIAMNDVSASDKKGAAIIGFICDEGVRRNQGRVGAANGPNALREGLSSLPWTFEEEQQIIDVGNIICLNHALEEAQRELGDVVSTLLQKKLQCVVLGGGHETLYGHYLGVRAAIPKDAKIGIIKIDAHIDLRPYDEQPSSGTMFRQILEQDPHVDYFVVGIQRYGYTKELFEKADELQVKYVIEDDMTSAANIQPLMDDLQHYMDQHDYVLLTLCMDVLNAAAAPGVSAPSPFGLEPTTVRTILQKVTSHPHTHSFDICEVNPSLDENGRTVKLGAYFVYEALNNLLGGQGL.

Residues His-130, Asp-156, His-158, Asp-160, Cys-245, and Asp-247 each contribute to the Mn(2+) site.

Belongs to the arginase family. It depends on Mn(2+) as a cofactor.

The enzyme catalyses N-formimidoyl-L-glutamate + H2O = formamide + L-glutamate. Its pathway is amino-acid degradation; L-histidine degradation into L-glutamate; L-glutamate from N-formimidoyl-L-glutamate (hydrolase route): step 1/1. Catalyzes the conversion of N-formimidoyl-L-glutamate to L-glutamate and formamide. The sequence is that of Formimidoylglutamase from Lysinibacillus sphaericus (strain C3-41).